A 172-amino-acid chain; its full sequence is MAPSFYHYLPVAMDERWEPKGWSIRRWWLVAAILVVLIGVVLVCLIVYFANAAHSEACKNGLRLQDECRNTTHLLKHQLTRAQDSLLQTEMQANSCNQTVMDLRDSLKKKVSQTQEQQARIKELENKIERLNQELENLRTQKEISTTVQVNSGGSVVVSSLLVLVAVLFLHF.

The Cytoplasmic portion of the chain corresponds to 1–26 (MAPSFYHYLPVAMDERWEPKGWSIRR). A Glycyl lysine isopeptide (Lys-Gly) (interchain with G-Cter in ubiquitin) cross-link involves residue K20. The helical; Signal-anchor for type II membrane protein transmembrane segment at 27–47 (WWLVAAILVVLIGVVLVCLIV) threads the bilayer. Residues 48-152 (YFANAAHSEA…EISTTVQVNS (105 aa)) are Extracellular-facing. Residues N70 and N97 are each glycosylated (N-linked (GlcNAc...) asparagine). Residues 103–149 (LRDSLKKKVSQTQEQQARIKELENKIERLNQELENLRTQKEISTTVQ) adopt a coiled-coil conformation. A lipid anchor (GPI-anchor amidated serine) is attached at S152. Positions 153-172 (GGSVVVSSLLVLVAVLFLHF) are cleaved as a propeptide — removed in mature form.

Parallel homodimer; disulfide-linked. May form homotetramers under reducing conditions. Isoform 1 and isoform 2 form homodimers and also heterodimers with each other. Dimerization is essential for its antiviral activity. Interacts (via cytoplasmic domain) with ARHGAP44. Interacts with MMP14 (via C-terminal cytoplasmic tail). Interacts with LILRA4/ILT7. Interacts with RNF115. In terms of processing, N-glycosylated. The GPI anchor is essential for its antiviral activity. In terms of tissue distribution, ubiquitously expressed, with highest levels in brain and liver. Present in liver (at protein level).

The protein localises to the golgi apparatus. The protein resides in the trans-Golgi network. Its subcellular location is the cell membrane. It localises to the late endosome. It is found in the membrane raft. The protein localises to the cytoplasm. The protein resides in the apical cell membrane. IFN-induced antiviral host restriction factor which efficiently blocks the release of diverse mammalian enveloped viruses by directly tethering nascent virions to the membranes of infected cells. Acts as a direct physical tether, holding virions to the cell membrane and linking virions to each other. The tethered virions can be internalized by endocytosis and subsequently degraded or they can remain on the cell surface. In either case, their spread as cell-free virions is restricted. Its target viruses belong to diverse families, including retroviridae: human immunodeficiency virus type 1 (HIV-1), mouse mammary tumor virus (MMTV) and murine leukemia virus (MLV), filoviridae: ebola virus (EBOV), arenaviridae: lassa virus (LASV), and rhabdoviridae: vesicular stomatitis virus (VSV). Can inhibit cell surface proteolytic activity of MMP14 causing decreased activation of MMP15 which results in inhibition of cell growth and migration. Can stimulate signaling by LILRA4/ILT7 and consequently provide negative feedback to the production of IFN by plasmacytoid dendritic cells in response to viral infection. Plays a role in the organization of the subapical actin cytoskeleton in polarized epithelial cells. In Rattus norvegicus (Rat), this protein is Bone marrow stromal antigen 2 (Bst2).